The chain runs to 247 residues: MSAHASTSAAANEARGRRSAEDVEYSKTHFRVCRFITETGVKLGMRSVPMATACVLYHRFFQSASLQIYEPYLVAMSAIHLAGKVEEQHLRTRDIINVCHRYFHPDSEPLELNGKFWELRDSIVQCELLILRQLNFQVTFEHPHKYLLHYLLSVRSLLNRHAWSRTPIAETALAVLKDSYHGSVCVRHRPQHLALTALYLALQTYGVQLPRGELEWWQVVCADITKAQIETIMSELLQLYDMEAKCT.

Belongs to the cyclin family. Cyclin-like FAM58 subfamily.

May be an activating cyclin for the cyclin-associated kinase CDK10. The sequence is that of Cyclin-Q (ccnq) from Danio rerio (Zebrafish).